The sequence spans 426 residues: Tryptophan--tRNA ligase (426 aa).

Positions 66–74 (PSGEMHLGN) match the 'HIGH' region motif. The 'KMSKS' region signature appears at 314 to 318 (KMSSS).

This sequence belongs to the class-I aminoacyl-tRNA synthetase family.

The protein localises to the cytoplasm. The catalysed reaction is tRNA(Trp) + L-tryptophan + ATP = L-tryptophyl-tRNA(Trp) + AMP + diphosphate + H(+). This Thermoplasma acidophilum (strain ATCC 25905 / DSM 1728 / JCM 9062 / NBRC 15155 / AMRC-C165) protein is Tryptophan--tRNA ligase.